Consider the following 590-residue polypeptide: Beta-(1--&gt;2)glucan export ATP-binding/permease protein NdvA (590 aa).

The ABC transmembrane type-1 domain maps to 21-301; that stretch reads VALICGANVA…MSAFANQISE (281 aa). 6 consecutive transmembrane segments (helical) span residues 22–42, 55–75, 136–156, 158–178, 248–268, and 275–295; these read ALIC…PIMF, VFST…AFVL, QHLS…SMDV, MSMV…LVMK, LSST…VTHG, and VIAF…MSAF. An ABC transporter domain is found at 335–569; it reads VRFEDVGFEF…NGRFASLLRA (235 aa). An ATP-binding site is contributed by 368–375; that stretch reads GPTGAGKT.

The protein belongs to the ABC transporter superfamily. Beta-(1--&gt;2)glucan exporter (TC 3.A.1.108.1) family. In terms of assembly, homodimer.

It localises to the cell inner membrane. It catalyses the reaction [(1-&gt;2)-beta-D-glucosyl](n)(in) + ATP + H2O = [(1-&gt;2)-beta-D-glucosyl](n)(out) + ADP + phosphate + H(+). Involved in beta-(1--&gt;2)glucan export. Transmembrane domains (TMD) form a pore in the inner membrane and the ATP-binding domain (NBD) is responsible for energy generation. The sequence is that of Beta-(1--&gt;2)glucan export ATP-binding/permease protein NdvA from Mesorhizobium japonicum (strain LMG 29417 / CECT 9101 / MAFF 303099) (Mesorhizobium loti (strain MAFF 303099)).